We begin with the raw amino-acid sequence, 91 residues long: Large ribosomal subunit protein eL31 (91 aa).

It belongs to the eukaryotic ribosomal protein eL31 family.

In Pyrobaculum calidifontis (strain DSM 21063 / JCM 11548 / VA1), this protein is Large ribosomal subunit protein eL31.